A 402-amino-acid polypeptide reads, in one-letter code: tRNA pseudouridine synthase Pus10 (402 aa).

The Nucleophile role is filled by Asp-215. Positions 370-402 (ERGGHPGARGGTRRRPRKGPARPAGGRDRPRKT) are disordered. A compositionally biased stretch (basic residues) spans 380 to 389 (GTRRRPRKGP).

This sequence belongs to the pseudouridine synthase Pus10 family.

It catalyses the reaction uridine(54) in tRNA = pseudouridine(54) in tRNA. The catalysed reaction is uridine(55) in tRNA = pseudouridine(55) in tRNA. Responsible for synthesis of pseudouridine from uracil-54 and uracil-55 in the psi GC loop of transfer RNAs. This chain is tRNA pseudouridine synthase Pus10, found in Cenarchaeum symbiosum (strain A).